A 133-amino-acid polypeptide reads, in one-letter code: uncharacterized protein (133 aa).

4 helical membrane passes run 5–27, 42–64, 77–99, and 103–125; these read KLFF…FSLI, IAWN…YSLY, ALIS…TFSS, and LVWW…LLLK.

The protein resides in the cell membrane. This is an uncharacterized protein from Bacillus subtilis (strain 168).